We begin with the raw amino-acid sequence, 397 residues long: Acetate kinase 2 (397 aa).

N10 serves as a coordination point for Mg(2+). K17 is an ATP binding site. R90 provides a ligand contact to substrate. D147 acts as the Proton donor/acceptor in catalysis. ATP-binding positions include 207-211 (HLGNG), 281-283 (DCR), and 329-333 (GIGEN). E383 is a Mg(2+) binding site.

This sequence belongs to the acetokinase family. In terms of assembly, homodimer. Mg(2+) is required as a cofactor. The cofactor is Mn(2+).

The protein resides in the cytoplasm. The enzyme catalyses acetate + ATP = acetyl phosphate + ADP. It participates in metabolic intermediate biosynthesis; acetyl-CoA biosynthesis; acetyl-CoA from acetate: step 1/2. Its function is as follows. Catalyzes the formation of acetyl phosphate from acetate and ATP. Can also catalyze the reverse reaction. This is Acetate kinase 2 from Photobacterium profundum (strain SS9).